A 356-amino-acid chain; its full sequence is tRNA N6-adenosine threonylcarbamoyltransferase (356 aa).

The Fe cation site is built by His131 and His135. Substrate is bound by residues 154–158 (LVSGG), Asp187, Gly200, and Asn289. Fe cation is bound at residue Asp317.

This sequence belongs to the KAE1 / TsaD family. The cofactor is Fe(2+).

The protein resides in the cytoplasm. The catalysed reaction is L-threonylcarbamoyladenylate + adenosine(37) in tRNA = N(6)-L-threonylcarbamoyladenosine(37) in tRNA + AMP + H(+). Its function is as follows. Required for the formation of a threonylcarbamoyl group on adenosine at position 37 (t(6)A37) in tRNAs that read codons beginning with adenine. Is involved in the transfer of the threonylcarbamoyl moiety of threonylcarbamoyl-AMP (TC-AMP) to the N6 group of A37, together with TsaE and TsaB. TsaD likely plays a direct catalytic role in this reaction. This is tRNA N6-adenosine threonylcarbamoyltransferase from Ruthia magnifica subsp. Calyptogena magnifica.